The chain runs to 383 residues: V-type proton ATPase subunit C 1-A (383 aa).

An N-acetylthreonine modification is found at Thr-2.

This sequence belongs to the V-ATPase C subunit family. In terms of assembly, V-ATPase is a heteromultimeric enzyme made up of two complexes: the ATP-hydrolytic V1 complex and the proton translocation V0 complex. The V1 complex consists of three catalytic AB heterodimers that form a heterohexamer, three peripheral stalks each consisting of EG heterodimers, one central rotor including subunits D and F, and the regulatory subunits C and H. The proton translocation complex V0 consists of the proton transport subunit a, a ring of proteolipid subunits c9c'', rotary subunit d, subunits e and f, and two accessory subunits.

Its function is as follows. Subunit of the V1 complex of vacuolar(H+)-ATPase (V-ATPase), a multisubunit enzyme composed of a peripheral complex (V1) that hydrolyzes ATP and a membrane integral complex (V0) that translocates protons. V-ATPase is responsible for acidifying and maintaining the pH of intracellular compartments and in some cell types, is targeted to the plasma membrane, where it is responsible for acidifying the extracellular environment. Subunit C is necessary for the assembly of the catalytic sector of the enzyme and is likely to have a specific function in its catalytic activity. The protein is V-type proton ATPase subunit C 1-A (atp6v1c1a) of Danio rerio (Zebrafish).